The sequence spans 296 residues: Protoheme IX farnesyltransferase (296 aa).

Transmembrane regions (helical) follow at residues 14 to 34 (IIFGNLISVVGGFLLASKGVI), 36 to 56 (YPLFLATLFGVSLVVASGCVF), 75 to 95 (VLVKGLIDPKVSLIYASILGI), 99 to 119 (LLLYVGANPLAMWLAVIGFVI), 133 to 153 (VYGTLIGSLSGAAPPVIGYCA), 163 to 183 (LILLLIFSLWQMPHSYAIAIF), 209 to 229 (ITLYILAFMVATLMLTLSGYA), 234 to 254 (LVVAAAVSVWWLGMALRGYKA), and 265 to 285 (FVFSIIAITSLSVMMSVDFNV).

The protein belongs to the UbiA prenyltransferase family. Protoheme IX farnesyltransferase subfamily.

It localises to the cell inner membrane. The enzyme catalyses heme b + (2E,6E)-farnesyl diphosphate + H2O = Fe(II)-heme o + diphosphate. The protein operates within porphyrin-containing compound metabolism; heme O biosynthesis; heme O from protoheme: step 1/1. Converts heme B (protoheme IX) to heme O by substitution of the vinyl group on carbon 2 of heme B porphyrin ring with a hydroxyethyl farnesyl side group. This Yersinia enterocolitica serotype O:8 / biotype 1B (strain NCTC 13174 / 8081) protein is Protoheme IX farnesyltransferase.